Consider the following 247-residue polypeptide: Large ribosomal subunit protein uL24m (247 aa).

The 34-residue stretch at 84–117 (FFRGDRIEVLVGKDKGKQGIVTQVIPERNWVIVE) folds into the KOW domain.

Belongs to the universal ribosomal protein uL24 family. In terms of assembly, component of the mitochondrial ribosome large subunit (39S) which comprises a 16S rRNA and about 50 distinct proteins.

The protein resides in the mitochondrion. This Drosophila pseudoobscura pseudoobscura (Fruit fly) protein is Large ribosomal subunit protein uL24m (mRpL24).